Here is a 146-residue protein sequence, read N- to C-terminus: Holo-[acyl-carrier-protein] synthase (146 aa).

Mg(2+)-binding residues include aspartate 9 and glutamate 63.

This sequence belongs to the P-Pant transferase superfamily. AcpS family. Mg(2+) is required as a cofactor.

The protein localises to the cytoplasm. The enzyme catalyses apo-[ACP] + CoA = holo-[ACP] + adenosine 3',5'-bisphosphate + H(+). Transfers the 4'-phosphopantetheine moiety from coenzyme A to a Ser of acyl-carrier-protein. This chain is Holo-[acyl-carrier-protein] synthase, found in Burkholderia ambifaria (strain ATCC BAA-244 / DSM 16087 / CCUG 44356 / LMG 19182 / AMMD) (Burkholderia cepacia (strain AMMD)).